Reading from the N-terminus, the 272-residue chain is Catabolic 3-dehydroquinate dehydratase (272 aa).

3-dehydroquinate contacts are provided by residues 66–68 (EFR) and Arg102. The active-site Proton donor/acceptor is the His163. The active-site Schiff-base intermediate with substrate is Lys190. Positions 232, 251, and 255 each coordinate 3-dehydroquinate.

It belongs to the type-I 3-dehydroquinase family.

The enzyme catalyses 3-dehydroquinate = 3-dehydroshikimate + H2O. The protein operates within aromatic compound metabolism; 3,4-dihydroxybenzoate biosynthesis; 3,4-dihydroxybenzoate from 3-dehydroquinate: step 1/2. Involved in the biosynthesis of protocatechuate. Catalyzes the catabolic dehydration of 3-dehydroquinate (DHQ) to yield 3-dehydroshikimate. This Acinetobacter baylyi (strain ATCC 33305 / BD413 / ADP1) protein is Catabolic 3-dehydroquinate dehydratase.